Here is a 66-residue protein sequence, read N- to C-terminus: Probable Sec-independent protein translocase protein TatE (66 aa).

Residues 1–21 traverse the membrane as a helical segment; the sequence is MEGISITKLLVIAVLIVLLFG. The segment at 46-66 is disordered; the sequence is ETPAAKKSDGAEAAPRVENKE.

This sequence belongs to the TatA/E family. TatE subfamily.

The protein resides in the cell inner membrane. Its function is as follows. Part of the twin-arginine translocation (Tat) system that transports large folded proteins containing a characteristic twin-arginine motif in their signal peptide across membranes. TatE shares overlapping functions with TatA. The polypeptide is Probable Sec-independent protein translocase protein TatE (Edwardsiella piscicida).